Here is a 385-residue protein sequence, read N- to C-terminus: MEQQKQKKRKVVSKSKRTQSKSASSLPLDLTSEILLRLPEKSIARFRCVSKLWLSITTDPYFINLFETRSPRPSLLVCFIENDKLFVSSIPQHLHSLQNSKRSYSSSQLFIVIIWNYQKDVGLICFKTSKMPIVWNPSKRQLITLPIPRLSWNNIIVFLGYDPVEGKHKVMCLPFRRSSDVCQVLTLGPAQEFSWITVKTYHKHCSDYQSSGRCIKGVVYYIAQVYHTHAWVLMCFDVRSEKFDMIKLHADIYREILITYEGRIACVEKRTTKDDYIALCILEDAKKDKWSSKDILAPFGHFDERLRTFFQLKGCTHDGEFIFVSSTFRKMDYILFFDPVKKTFRRFELKEIADDQARVNNGDPYGPIFAFCAFLDHVESQMSLQ.

Residues 1 to 19 (MEQQKQKKRKVVSKSKRTQ) are compositionally biased toward basic residues. The tract at residues 1–24 (MEQQKQKKRKVVSKSKRTQSKSAS) is disordered. Residues 20–69 (SKSASSLPLDLTSEILLRLPEKSIARFRCVSKLWLSITTDPYFINLFETR) form the F-box domain.

The polypeptide is Putative F-box protein At1g47765 (Arabidopsis thaliana (Mouse-ear cress)).